The following is a 218-amino-acid chain: Probable nicotinate-nucleotide adenylyltransferase (218 aa).

Belongs to the NadD family.

The enzyme catalyses nicotinate beta-D-ribonucleotide + ATP + H(+) = deamido-NAD(+) + diphosphate. Its pathway is cofactor biosynthesis; NAD(+) biosynthesis; deamido-NAD(+) from nicotinate D-ribonucleotide: step 1/1. Functionally, catalyzes the reversible adenylation of nicotinate mononucleotide (NaMN) to nicotinic acid adenine dinucleotide (NaAD). The sequence is that of Probable nicotinate-nucleotide adenylyltransferase from Sodalis glossinidius (strain morsitans).